The chain runs to 260 residues: tRNA pseudouridine synthase A (260 aa).

The Nucleophile role is filled by Asp51. Tyr109 contributes to the substrate binding site.

The protein belongs to the tRNA pseudouridine synthase TruA family. Homodimer.

It catalyses the reaction uridine(38/39/40) in tRNA = pseudouridine(38/39/40) in tRNA. Its function is as follows. Formation of pseudouridine at positions 38, 39 and 40 in the anticodon stem and loop of transfer RNAs. The protein is tRNA pseudouridine synthase A of Albidiferax ferrireducens (strain ATCC BAA-621 / DSM 15236 / T118) (Rhodoferax ferrireducens).